Here is a 1020-residue protein sequence, read N- to C-terminus: RNA-binding protein 44 (1020 aa).

Disordered stretches follow at residues 1–23 (MQAT…GHLQ) and 50–70 (DGEG…NSSV). Residues 58–70 (TDERTNVKENSSV) show a composition bias toward basic and acidic residues. Residues Ser-249, Ser-371, Ser-374, Ser-516, Ser-683, and Ser-690 each carry the phosphoserine modification. The RRM domain maps to 796–870 (FLIHVGGLCP…KSVNVRLVKI (75 aa)).

As to quaternary structure, homodimer. Interacts with TEX14.

The protein resides in the cytoplasm. In terms of biological role, component of intercellular bridges during meiosis. Intercellular bridges are evolutionarily conserved structures that connect differentiating germ cells. Not required for fertility. This is RNA-binding protein 44 (Rbm44) from Rattus norvegicus (Rat).